Here is a 224-residue protein sequence, read N- to C-terminus: MKLKDFPDEERPRERLLNTGAESLSNHELLAILLRTGTKKESVLQLSSRLLQTFDGLRLLKEASAEELSSISGIGRAKAVQILAALELGRRIHSLACKDRYVIRFPEDAANFLMGDMRFLSQEHFVCVYLNTKNQVIHKRTVFIGSLNSSIVHPREVFKEALKRSAASFICVHNHPSGDPAPSREDIEVTQRLHESGQLLGIELLDHIIIGDQKFVSLKEKGYL.

In terms of domain architecture, MPN spans 102 to 224 (VIRFPEDAAN…FVSLKEKGYL (123 aa)). Residues H173, H175, and D186 each coordinate Zn(2+). A JAMM motif motif is present at residues 173-186 (HNHPSGDPAPSRED).

This sequence belongs to the UPF0758 family.

This chain is UPF0758 protein BLi02933/BL00636, found in Bacillus licheniformis (strain ATCC 14580 / DSM 13 / JCM 2505 / CCUG 7422 / NBRC 12200 / NCIMB 9375 / NCTC 10341 / NRRL NRS-1264 / Gibson 46).